Consider the following 1293-residue polypeptide: Phosphoribosylformylglycinamidine synthase (1293 aa).

ATP-binding positions include 305–316 (GAATGSGGEIRD), 384–386 (TGY), and A676. The disordered stretch occupies residues 307-326 (ATGSGGEIRDEGATGRGSKP). 4 residues coordinate Mg(2+): D677, E716, N720, and D884. S886 lines the ATP pocket. In terms of domain architecture, Glutamine amidotransferase type-1 spans 1040-1293 (MAILREQGVN…MFRNARVKIG (254 aa)). Catalysis depends on C1133, which acts as the Nucleophile. Catalysis depends on residues H1258 and E1260.

The protein in the N-terminal section; belongs to the FGAMS family. Monomer.

It is found in the cytoplasm. It carries out the reaction N(2)-formyl-N(1)-(5-phospho-beta-D-ribosyl)glycinamide + L-glutamine + ATP + H2O = 2-formamido-N(1)-(5-O-phospho-beta-D-ribosyl)acetamidine + L-glutamate + ADP + phosphate + H(+). Its pathway is purine metabolism; IMP biosynthesis via de novo pathway; 5-amino-1-(5-phospho-D-ribosyl)imidazole from N(2)-formyl-N(1)-(5-phospho-D-ribosyl)glycinamide: step 1/2. Functionally, phosphoribosylformylglycinamidine synthase involved in the purines biosynthetic pathway. Catalyzes the ATP-dependent conversion of formylglycinamide ribonucleotide (FGAR) and glutamine to yield formylglycinamidine ribonucleotide (FGAM) and glutamate. The polypeptide is Phosphoribosylformylglycinamidine synthase (Shewanella frigidimarina (strain NCIMB 400)).